The primary structure comprises 184 residues: Shikimate kinase (184 aa).

An ATP-binding site is contributed by 20–25 (GVGKSR). Ser24 is a Mg(2+) binding site. Residues Asp42, Arg66, and Gly88 each coordinate substrate. Arg127 is an ATP binding site. Substrate is bound at residue Arg146. Arg162 is a binding site for ATP.

It belongs to the shikimate kinase family. In terms of assembly, monomer. Requires Mg(2+) as cofactor.

It is found in the cytoplasm. The catalysed reaction is shikimate + ATP = 3-phosphoshikimate + ADP + H(+). Its pathway is metabolic intermediate biosynthesis; chorismate biosynthesis; chorismate from D-erythrose 4-phosphate and phosphoenolpyruvate: step 5/7. Its function is as follows. Catalyzes the specific phosphorylation of the 3-hydroxyl group of shikimic acid using ATP as a cosubstrate. This Thermus thermophilus (strain ATCC 27634 / DSM 579 / HB8) protein is Shikimate kinase.